The sequence spans 186 residues: Elongation factor P (186 aa).

This sequence belongs to the elongation factor P family.

Its subcellular location is the cytoplasm. It participates in protein biosynthesis; polypeptide chain elongation. Involved in peptide bond synthesis. Stimulates efficient translation and peptide-bond synthesis on native or reconstituted 70S ribosomes in vitro. Probably functions indirectly by altering the affinity of the ribosome for aminoacyl-tRNA, thus increasing their reactivity as acceptors for peptidyl transferase. This is Elongation factor P from Streptococcus thermophilus (strain CNRZ 1066).